The primary structure comprises 157 residues: Probable succinate transporter subunit YjjB (157 aa).

4 helical membrane-spanning segments follow: residues 8–28 (LALM…AMVF), 55–75 (AGFN…SIGI), 87–107 (VFTV…TAMI), and 129–149 (FLKA…PGLW).

Belongs to the ThrE exporter (TC 2.A.79) family. In terms of assembly, the transporter is composed of YjjB and YjjP.

Its subcellular location is the cell inner membrane. In terms of biological role, involved in succinate export with YjjP. Both proteins are required for export. In Salmonella agona (strain SL483), this protein is Probable succinate transporter subunit YjjB.